Consider the following 642-residue polypeptide: Threonine--tRNA ligase (642 aa).

Residues 1-61 enclose the TGS domain; sequence MPVITLPDGS…ENDATLAIIT (61 aa). A catalytic region spans residues 243-534; it reads DHRKIGKQLD…LTEEFAGFFP (292 aa). Zn(2+)-binding residues include Cys-334, His-385, and His-511.

The protein belongs to the class-II aminoacyl-tRNA synthetase family. As to quaternary structure, homodimer. It depends on Zn(2+) as a cofactor.

Its subcellular location is the cytoplasm. The enzyme catalyses tRNA(Thr) + L-threonine + ATP = L-threonyl-tRNA(Thr) + AMP + diphosphate + H(+). Functionally, catalyzes the attachment of threonine to tRNA(Thr) in a two-step reaction: L-threonine is first activated by ATP to form Thr-AMP and then transferred to the acceptor end of tRNA(Thr). Also edits incorrectly charged L-seryl-tRNA(Thr). This is Threonine--tRNA ligase from Salmonella choleraesuis (strain SC-B67).